A 343-amino-acid chain; its full sequence is Flap endonuclease 1 (343 aa).

The segment at 1-98 (MGVPIGELIP…KELEKRREAR (98 aa)) is N-domain. The Mg(2+) site is built by Asp-27, Asp-80, Glu-152, Glu-154, Asp-173, Asp-175, and Asp-236. Positions 116–258 (EARKYAQRAT…KALEIVKYSK (143 aa)) are I-domain. The interval 330–338 (KQSTLESWF) is interaction with PCNA.

This sequence belongs to the XPG/RAD2 endonuclease family. FEN1 subfamily. In terms of assembly, interacts with PCNA. PCNA stimulates the nuclease activity without altering cleavage specificity. It depends on Mg(2+) as a cofactor.

In terms of biological role, structure-specific nuclease with 5'-flap endonuclease and 5'-3' exonuclease activities involved in DNA replication and repair. During DNA replication, cleaves the 5'-overhanging flap structure that is generated by displacement synthesis when DNA polymerase encounters the 5'-end of a downstream Okazaki fragment. Binds the unpaired 3'-DNA end and kinks the DNA to facilitate 5' cleavage specificity. Cleaves one nucleotide into the double-stranded DNA from the junction in flap DNA, leaving a nick for ligation. Also involved in the base excision repair (BER) pathway. Acts as a genome stabilization factor that prevents flaps from equilibrating into structures that lead to duplications and deletions. Also possesses 5'-3' exonuclease activity on nicked or gapped double-stranded DNA. The sequence is that of Flap endonuclease 1 from Pyrococcus abyssi (strain GE5 / Orsay).